A 412-amino-acid polypeptide reads, in one-letter code: MGKPQETILIIGAGIAGLTASRLPTNNGIPNIVFEASTPERNQGFAISLQEFGYSSLLAALGDLPLSNLTRGVAPDRQIGGTGWIDQALRDNRTGELLVAPDLTTMKQTIVRANRNALRHWIADCGEDELDVRYGHKLRRIEGKLGDITAVFENHAKYKGSLVIAADGVNSTTRSQILPNVIPETIPLIHYHGEFQVSHSAFDKLIRPHSGHSNILVGVGDRFNTPLSICNVTKTKVHLDWSYSRPVKGENDTLYRPNVPSEEAKQIPPALLEELDALSLAEPWKNFLNSESLKTHRVFHWTTRCVYITQDDARRAGEQGVVFVGDSWHAMPIFGGEGGNHALLDGVELANAIIKSTASGGKDGWDNVVKSYYAGAWKRSQEAVRRSTQRFFLLHRPAKEWKEISEKKKKPA.

An N-terminal signal peptide occupies residues Met-1–Ser-21. The FAD site is built by Glu-35 and Ala-46. Residues Asn-68 and Asn-92 are each glycosylated (N-linked (GlcNAc...) asparagine). Arg-119 provides a ligand contact to FAD. Residues Asn-170, Asn-231, and Asn-251 are each glycosylated (N-linked (GlcNAc...) asparagine). The FAD site is built by Asp-326 and Gly-339.

This sequence belongs to the paxM FAD-dependent monooxygenase family. The cofactor is FAD.

It participates in secondary metabolite biosynthesis. Its function is as follows. FAD-dependent monooxygenase; part of the gene cluster that mediates the biosynthesis of neosartoricin B, a prenylated anthracenone that probably exhibits T-cell antiproliferative activity, suggestive of a physiological role as an immunosuppressive agent. The non-reducing polyketide synthase nscA probably synthesizes and cyclizes the decaketide backbone. The hydrolase nscB then mediates the product release through hydrolysis followed by spontaneous decarboxylation. The prenyltransferase nscD catalyzes the addition of the dimethylallyl group to the aromatic C5. The FAD-dependent monooxygenase nscC is then responsible for the stereospecific hydroxylation at C2. Neosartoricin B can be converted into two additional compounds neosartoricins C and D. Neosartoricin C is a spirocyclic compound that is cyclized through the attack of C3 hydroxyl on C14, followed by dehydration. On the other hand, neosartoricin D is a further cyclized compound in which attack of C2 on C14 in neosartoricin C results in the formation of the acetal-containing dioxabicyclo-octanone ring. Both of these compounds are novel and possibly represent related metabolites of the gene cluster. This Trichophyton rubrum (strain ATCC MYA-4607 / CBS 118892) (Athlete's foot fungus) protein is FAD-dependent monooxygenase nscC.